A 162-amino-acid polypeptide reads, in one-letter code: NAD(P)H-quinone oxidoreductase subunit N (162 aa).

This sequence belongs to the complex I NdhN subunit family. In terms of assembly, NDH-1 can be composed of about 15 different subunits; different subcomplexes with different compositions have been identified which probably have different functions.

The protein resides in the cellular thylakoid membrane. It carries out the reaction a plastoquinone + NADH + (n+1) H(+)(in) = a plastoquinol + NAD(+) + n H(+)(out). The enzyme catalyses a plastoquinone + NADPH + (n+1) H(+)(in) = a plastoquinol + NADP(+) + n H(+)(out). Functionally, NDH-1 shuttles electrons from an unknown electron donor, via FMN and iron-sulfur (Fe-S) centers, to quinones in the respiratory and/or the photosynthetic chain. The immediate electron acceptor for the enzyme in this species is believed to be plastoquinone. Couples the redox reaction to proton translocation, and thus conserves the redox energy in a proton gradient. Cyanobacterial NDH-1 also plays a role in inorganic carbon-concentration. The polypeptide is NAD(P)H-quinone oxidoreductase subunit N (Nostoc sp. (strain PCC 7120 / SAG 25.82 / UTEX 2576)).